The primary structure comprises 54 residues: Ovomucoid (54 aa).

The Kazal-like domain maps to 4–54 (VDCSDYPKPVCPLDYMPLCGSDSKTYSNKCNFCNAVVESSGTLTLRHFGKC). 3 disulfides stabilise this stretch: C6-C36, C14-C33, and C22-C54.

In terms of processing, this is the only ovomucoid third domain known to be not glycosylated.

The protein resides in the secreted. The polypeptide is Ovomucoid (Struthio camelus (Common ostrich)).